A 521-amino-acid polypeptide reads, in one-letter code: MEASVLSPTSWEKRRAWLRQSRNWQTQVLEEEAAAALQDVPDPEPSSLDDVFQEGNPINKIEDWLQDCGYSEEGFSEEAGQFIYNGFCSHGTSFEDDLTLGAEATLLAANGKLFSRSFLETARPCQLLDLGCSLASSSMTGGTNKTSSSISEILDKVQEDAEDVLFSLGFGQEDHKDTSRIPARFFTTPSQAKGIDFQLFLKSQVRRIEMEDPCLMLASRFKQVQTLAVTADAFFCLYSYVSKTPVQKFTPSHMFWNCNHPTDVPSIRILSREPEPQSPRDRLRKAISKMCLYTCPRDRPPPPHNTPKRNSLDQVVLEVMDKVKEEKQFLQQDSDLGQFSQEDPVPPAEGKKLPTSPYPCVFCCEEETQQRMSTVLAPSQTLDSNPKVPCCTHSLPIEDPQWSTDPAQIRRELCSLPATNTETHPAKDETFWKRKSRARKSLFQKNLMGRKVKSLDLSITQQKWKQSVDRPELRRSLSQQPQDTFDLEEVQSNSEEEQSQSRWPSRPRHPHHHQTFAGKDS.

Serine 311 bears the Phosphoserine mark. The segment covering 331 to 341 (QQDSDLGQFSQ) has biased composition (polar residues). Disordered stretches follow at residues 331–351 (QQDS…AEGK) and 461–521 (QQKW…GKDS). The segment covering 466–475 (QSVDRPELRR) has biased composition (basic and acidic residues). Residues 485–498 (FDLEEVQSNSEEEQ) show a composition bias toward acidic residues. Residues 505-514 (SRPRHPHHHQ) show a composition bias toward basic residues.

Interacts with PLCG1 and GRB2; the association is increased with prolonged stimulation of the TCR and may facilitate the assembly of the LAT signalosome. Interacts with ITPR1. Also interacts with ITPR3. Interacts with HSPA9. Post-translationally, may be phosphorylated in response to store-operated Ca(+2) entry.

It localises to the cytoplasm. Its subcellular location is the endoplasmic reticulum membrane. In terms of biological role, required for the development and maturation of T-cells, its function being essential for the late stages of thymocyte development. Plays a role in T-cell antigen receptor (TCR)-mediated activation of the ERK and NFAT signaling pathways, possibly by serving as a scaffolding protein that promotes the assembly of the LAT signalosome in thymocytes. May play a role in the regulation of inositol 1,4,5-trisphosphate receptor-mediated Ca(2+) release and mitochondrial Ca(2+) uptake via the mitochondria-associated endoplasmic reticulum membrane (MAM) compartment. The chain is Protein TESPA1 (TESPA1) from Homo sapiens (Human).